We begin with the raw amino-acid sequence, 148 residues long: Oleosin 16 kDa (148 aa).

The segment at 1-21 (MADQHRGVIGGGGYGDRGGQE) is disordered. Residue Ala2 is modified to N-acetylalanine. Positions 2–34 (ADQHRGVIGGGGYGDRGGQEQQEKQPFMMTALK) are polar. Positions 8–17 (VIGGGGYGDR) are enriched in gly residues. Residues 35–106 (TVTAATAGGS…AALSVFSWMY (72 aa)) are hydrophobic. A run of 3 helical transmembrane segments spans residues 43-63 (GSML…LTVA), 66-86 (VLVI…LMAA), and 87-107 (GFVT…WMYK).

This sequence belongs to the oleosin family.

The protein localises to the lipid droplet. The protein resides in the membrane. Its function is as follows. May have a structural role to stabilize the lipid body during desiccation of the seed by preventing coalescence of the oil. Probably interacts with both lipid and phospholipid moieties of lipid bodies. May also provide recognition signals for specific lipase anchorage in lipolysis during seedling growth. This Oryza sativa subsp. japonica (Rice) protein is Oleosin 16 kDa (OLE16).